Consider the following 209-residue polypeptide: Phosphoheptose isomerase (209 aa).

Residues 50–209 (IAETFRNGGK…ELVESMMGYA (160 aa)) enclose the SIS domain. Residue 65-67 (NGG) coordinates substrate. Zn(2+)-binding residues include histidine 74 and glutamate 78. Residues glutamate 78, 109 to 110 (ND), 135 to 137 (STS), serine 140, and glutamine 188 each bind substrate. Residues glutamine 188 and histidine 196 each coordinate Zn(2+).

Belongs to the SIS family. GmhA subfamily. The cofactor is Zn(2+).

Its subcellular location is the cytoplasm. It catalyses the reaction 2 D-sedoheptulose 7-phosphate = D-glycero-alpha-D-manno-heptose 7-phosphate + D-glycero-beta-D-manno-heptose 7-phosphate. The protein operates within carbohydrate biosynthesis; D-glycero-D-manno-heptose 7-phosphate biosynthesis; D-glycero-alpha-D-manno-heptose 7-phosphate and D-glycero-beta-D-manno-heptose 7-phosphate from sedoheptulose 7-phosphate: step 1/1. Functionally, catalyzes the isomerization of sedoheptulose 7-phosphate in D-glycero-D-manno-heptose 7-phosphate. The sequence is that of Phosphoheptose isomerase from Chlorobaculum parvum (strain DSM 263 / NCIMB 8327) (Chlorobium vibrioforme subsp. thiosulfatophilum).